The chain runs to 1077 residues: Disheveled-associated activator of morphogenesis 1 (1077 aa).

Ser-34 is modified (phosphoserine). In terms of domain architecture, GBD/FH3 spans 45–420 (LPMPPVEELD…QIVIQNDKGQ (376 aa)). Positions 437–526 (RMLVNENEVK…ELNRRAVCAA (90 aa)) form a coiled coil. Disordered regions lie at residues 457–478 (KEHNELQQKLEKKERECDAKTQ) and 526–596 (AVPG…PVSL). One can recognise an FH1 domain in the interval 528–599 (PGGPSPGAPG…PGAPVSLTLK (72 aa)). Pro residues-rich tracts occupy residues 530–539 (GPSPGAPGGP) and 549–592 (LPPP…PPGA). Residues 600 to 1008 (KKNIPQPTNA…EERRARLEAQ (409 aa)) enclose the FH2 domain. Residues 693–702 (QNCNILLSRL) form an actin-binding region. Positions 1007-1026 (AQLKEQRERERKVRKAKESS) are enriched in basic and acidic residues. 2 disordered regions span residues 1007 to 1033 (AQLKEQRERERKVRKAKESSEESGEFD) and 1056 to 1077 (RKRISNQVTDSSRERPITKLNF). 2 positions are modified to phosphoserine: Ser-1026 and Ser-1029. Positions 1026–1057 (SEESGEFDDLVSALRSGEVFDKDLSKLKRNRK) constitute a DAD domain. Residues 1066–1077 (SSRERPITKLNF) are compositionally biased toward basic and acidic residues.

This sequence belongs to the formin homology family. As to quaternary structure, interacts with CIP4, FNBP1 and FNBP1L. Interacts with the SH3 domains of Abl, BTK, endophilin, spectrin and SRC. Binds specifically to GTP-bound CDC42 and RHOA. Interacts with INTU; INTU mediates the indirect interaction between DAAM1 and NPHP4. Interacts (via coiled coil domain) with KANK1 (via coiled coil domain). In early embryogenesis, expressed in embryonic and extraembryonic ectoderm. In later stages of gastrulation, expressed also in somites and ribs and posterior vertebrae of developing skeletal system. During organogenesis, expressed in CNS, PNS, stomach, liver and limb bud.

It localises to the cytoplasm. The protein localises to the cytoskeleton. The protein resides in the cilium basal body. In terms of biological role, binds to disheveled (Dvl) and Rho, and mediates Wnt-induced Dvl-Rho complex formation. May play a role as a scaffolding protein to recruit Rho-GDP and Rho-GEF, thereby enhancing Rho-GTP formation. Can direct nucleation and elongation of new actin filaments. Involved in building functional cilia. Involved in the organization of the subapical actin network in multiciliated epithelial cells. Together with DAAM2, required for myocardial maturation and sarcomere assembly. During cell division, may regulate RHOA activation that signals spindle orientation and chromosomal segregation. This Mus musculus (Mouse) protein is Disheveled-associated activator of morphogenesis 1 (Daam1).